The chain runs to 755 residues: Periplasmic nitrate reductase (755 aa).

A signal peptide (tat-type signal) is located at residues 1-32; it reads MSTSRRDFLKYFAMSAAVAAASGAGFGSLALA. A 4Fe-4S Mo/W bis-MGD-type domain is found at 38–93; that stretch reads EKWVKGVCRYCGTGCGVLVGVKDGKAVAIQGDPNNHNAGLLCLKGSLLIPVLNSKE. [4Fe-4S] cluster-binding residues include C45, C48, C52, and C79. Mo-bis(molybdopterin guanine dinucleotide)-binding positions include K81, Q143, N168, C172, 208–212, 236–238, 255–257, M340, Q344, N450, 475–477, and 647–656; these read NTSEA, DPR, GTD, IEA, and SMRVIDHWHT. Residues 648–653 and F721 each bind substrate; that span reads MRVIDH. Mo-bis(molybdopterin guanine dinucleotide) is bound by residues N729 and K746.

This sequence belongs to the prokaryotic molybdopterin-containing oxidoreductase family. NasA/NapA/NarB subfamily. In terms of assembly, monomer. Component of the periplasmic nitrate reductase NapAB complex composed of NapA and NapB. [4Fe-4S] cluster serves as cofactor. It depends on Mo-bis(molybdopterin guanine dinucleotide) as a cofactor. In terms of processing, predicted to be exported by the Tat system. The position of the signal peptide cleavage has been experimentally proven.

It is found in the periplasm. The enzyme catalyses 2 Fe(II)-[cytochrome] + nitrate + 2 H(+) = 2 Fe(III)-[cytochrome] + nitrite + H2O. Its activity is regulated as follows. Activated by potassium and sodium ions and inhibited by magnesium and calcium ions. In terms of biological role, catalytic subunit of the periplasmic nitrate reductase complex NapAB. Receives electrons from NapB and catalyzes the reduction of nitrate to nitrite. The chain is Periplasmic nitrate reductase from Desulfovibrio desulfuricans (strain ATCC 27774 / DSM 6949 / MB).